The sequence spans 200 residues: Small ribosomal subunit protein uS4 (200 aa).

The S4 RNA-binding domain occupies 91-150 (TRLDNVVYRLGITPTRRSARQLVSHKHITVNGKIVNIPSYALKVGDIIGLTEKTKSSNAI).

Belongs to the universal ribosomal protein uS4 family. Part of the 30S ribosomal subunit. Contacts protein S5. The interaction surface between S4 and S5 is involved in control of translational fidelity.

In terms of biological role, one of the primary rRNA binding proteins, it binds directly to 16S rRNA where it nucleates assembly of the body of the 30S subunit. With S5 and S12 plays an important role in translational accuracy. The polypeptide is Small ribosomal subunit protein uS4 (Amoebophilus asiaticus (strain 5a2)).